Consider the following 176-residue polypeptide: MGTLGARRGLEWFLGFYFLSHIPITLLMDLQGVLPRDLYPVELRNLQQWYIEEFKDPLLQTPPAWFKSFLFCELVFQLPFFPIAAYAFFKGGCKWIRTPAIIYSVHTMTTLIPILSTLLLDDFSKASHFRGQGPKTFQERLFLISVYIPYFLIPLILLLFMVRNPYYKSEEKRKKK.

The Cytoplasmic segment spans residues M1 to G9. Residues L10–L30 traverse the membrane as a helical segment. Residues L10–L158 enclose the EXPERA domain. Residues Q31 to S68 are Lumenal-facing. The helical transmembrane segment at F69–F89 threads the bilayer. 2 residues coordinate cholesterol: V75 and Q77. Residues K90–P99 are Cytoplasmic-facing. A helical transmembrane segment spans residues A100 to L120. Residues D121–L141 lie on the Lumenal side of the membrane. Residues F142–V162 traverse the membrane as a helical segment. Residues R163–K176 lie on the Cytoplasmic side of the membrane. The ER retention motif motif lies at K172–K176.

The protein belongs to the TMEM97/sigma-2 receptor family. In terms of assembly, homodimer. Interacts with NPC1; the interaction impairs NPC1-mediated cholesterol transport. Interacts with PGRMC1 and LDLR; the interaction increases LDL internalization. Interacts with histatin 1/HTN1; the interaction induces HTN1-stimulating wound healing. Interacts with TSPO.

It localises to the rough endoplasmic reticulum membrane. The protein localises to the nucleus membrane. In terms of biological role, sigma-2 receptor which contributes to ameliorate dysfunctional cellular processes and slow degenerative progression by regulating cell functions including cholesterol biosynthesis/trafficking, membrane trafficking, autophagy, lipid membrane-bound protein trafficking, and receptor stabilization at the cell surface. Forms a ternary complex with PGRMC1 receptor and low density lipoprotein receptor/LDLR at the plasma membrane, which increases LDLR-mediated LDL cholesterol internalization. Decreases lysosomal sterol transporter NPC1 availability to the cell, probably through NPC1-binding, hence controlling lipid transport, including cholesterol and LBPA, outside of late endosome/lysosome. Binds regio- and stereoselective ligand 20(S)-hydroxycholesterol (20(S)-OHC) which enhances TMEM97-NPC1 interaction and decreases TMEM97-PGRMC1 and TMEM97-TSPO interactions, thereby linking OHC binding to cholesterol homeostasis. Also able to bind cholesterol. Binds histatin 1 (Hst 1)/HN1 salivary peptide at the ER membrane, which is critical for increasing mitochondria-ER contacts and stimulating Hst1 wound healing properties. May alter the activity of some cytochrome P450 proteins. Although shows homologies with sterol isomerases (EXPERA domain), not able to catalyze sterol isomerization. However, may act as sensors of these molecules. Acts as a quality control factor in the ER, promoting the proteolytic degradation of nonproductive and extramitochondrial precursor proteins in the ER membrane thus removing them from the ER surface. This is Sigma intracellular receptor 2 (TMEM97) from Bos taurus (Bovine).